A 113-amino-acid polypeptide reads, in one-letter code: MISFSLLLLISLLTCAGQLCQKQAVMCWRSDVYQRASALKWLIGAVILLAVGMLFWLRLLQILPLGIAYPMLSINFIMVTLAGKFFYQEKAGIKHWSGVVFIMLGILLMSLNE.

3 helical membrane passes run S37–L57, I62–A82, and A91–L111. The EamA domain occupies A45–L111.

It belongs to the ArnE family. As to quaternary structure, heterodimer of ArnE and ArnF.

The protein resides in the cell inner membrane. It participates in bacterial outer membrane biogenesis; lipopolysaccharide biosynthesis. Its function is as follows. Translocates 4-amino-4-deoxy-L-arabinose-phosphoundecaprenol (alpha-L-Ara4N-phosphoundecaprenol) from the cytoplasmic to the periplasmic side of the inner membrane. The sequence is that of Probable 4-amino-4-deoxy-L-arabinose-phosphoundecaprenol flippase subunit ArnE from Photorhabdus laumondii subsp. laumondii (strain DSM 15139 / CIP 105565 / TT01) (Photorhabdus luminescens subsp. laumondii).